Reading from the N-terminus, the 140-residue chain is Transcription antitermination protein NusB (140 aa).

The protein belongs to the NusB family.

Functionally, involved in transcription antitermination. Required for transcription of ribosomal RNA (rRNA) genes. Binds specifically to the boxA antiterminator sequence of the ribosomal RNA (rrn) operons. This chain is Transcription antitermination protein NusB, found in Streptococcus pneumoniae serotype 2 (strain D39 / NCTC 7466).